We begin with the raw amino-acid sequence, 572 residues long: Chromatin assembly factor 1 subunit B (572 aa).

WD repeat units follow at residues 11–54 (HNKE…DGKA), 64–103 (RHTK…EPEQ), 127–166 (GHLE…KISI), 169–208 (EHKS…VAFN), 228–279 (FHDD…RPIA), 301–347 (RPVA…PFGY), and 351–392 (IHYH…IPLK). Residue T401 is modified to Phosphothreonine. The interval 403–572 (DTAKKAKNQT…LAPDDSSKTV (170 aa)) is disordered. Positions 411–430 (QTHQGSSPGSRSVEGTPSNR) are enriched in polar residues. S416 carries the post-translational modification Phosphoserine. T426 is subject to Phosphothreonine. Low complexity predominate over residues 431-452 (TQDPSSPCTTPSPTTQSPAPSA). Position 436 is a phosphoserine (S436). Phosphothreonine is present on T440. 2 positions are modified to phosphoserine: S456 and S465. K501 is modified (N6-acetyllysine). Residues T502 and T510 each carry the phosphothreonine modification. Positions 511-529 (PLKTDTVPNPQPNSGTAPS) are enriched in polar residues. Residues 546 to 559 (PELKRPRLEEREGD) show a composition bias toward basic and acidic residues.

It belongs to the WD repeat HIR1 family. In terms of assembly, subunit of the CAF-1 complex that contains RBBP4, CHAF1B and CHAF1A. CHAF1A binds directly to CHAF1B. Interacts with histones H3.1, H3.2 and H3.1t.

The protein resides in the nucleus. Its subcellular location is the cytoplasm. Its function is as follows. Acts as a component of the histone chaperone complex chromatin assembly factor 1 (CAF-1), which assembles histone octamers onto DNA during replication and repair. CAF-1 performs the first step of the nucleosome assembly process, bringing newly synthesized histones H3 and H4 to replicating DNA; histones H2A/H2B can bind to this chromatin precursor subsequent to DNA replication to complete the histone octamer. In Mus musculus (Mouse), this protein is Chromatin assembly factor 1 subunit B.